The primary structure comprises 528 residues: G patch domain-containing protein 2 (528 aa).

A disordered region spans residues 36–119; sequence LEESSEQARG…NKKDHSDSDD (84 aa). Over residues 63–77 the composition is skewed to basic residues; that stretch reads RQARKRRGRKRRSYN. The span at 98 to 117 shows a compositional bias: basic and acidic residues; sequence EPSKDYRENHNNNKKDHSDS. A phosphoserine mark is found at Ser-115, Ser-117, Ser-146, and Ser-195. 2 disordered regions span residues 232–282 and 487–528; these read SEET…GDDE and GRDG…GKSA. The segment covering 239–252 has biased composition (basic and acidic residues); that stretch reads NKDKMECEEQKVSD. The region spanning 467–513 is the G-patch domain; it reads ENNIGNRMLQNMGWTPGSGLGRDGKGISEPIQAMQRPKGLGLGFPLP. Over residues 514-528 the composition is skewed to polar residues; it reads KSTSATTTPNAGKSA.

In terms of assembly, interacts with DHX15. As to expression, testis.

Its subcellular location is the nucleus speckle. It localises to the nucleus. The protein localises to the nucleolus. Functionally, enhances the ATPase activity of DHX15 in vitro. The chain is G patch domain-containing protein 2 (GPATCH2) from Homo sapiens (Human).